The chain runs to 306 residues: Ribonucleoside-diphosphate reductase small subunit (306 aa).

3 residues coordinate Fe cation: D66, E96, and H99. The active site involves Y103. Residues 153 to 173 (ILMILIEGIFFVSSFAAIAYL) traverse the membrane as a helical segment. E159, E193, and H196 together coordinate Fe cation.

This sequence belongs to the ribonucleoside diphosphate reductase small chain family. In terms of assembly, heterotetramer composed of a homodimer of the large subunit (R1) and a homodimer of the small subunit (R2). Larger multisubunit protein complex are also active, composed of (R1)n(R2)n. Fe cation serves as cofactor.

The protein localises to the host membrane. The catalysed reaction is a 2'-deoxyribonucleoside 5'-diphosphate + [thioredoxin]-disulfide + H2O = a ribonucleoside 5'-diphosphate + [thioredoxin]-dithiol. Its function is as follows. Ribonucleoside-diphosphate reductase holoenzyme provides the precursors necessary for viral DNA synthesis. Allows virus growth in non-dividing cells, as well as reactivation from latency in infected hosts. Catalyzes the biosynthesis of deoxyribonucleotides from the corresponding ribonucleotides. The chain is Ribonucleoside-diphosphate reductase small subunit from Varicella-zoster virus (strain Dumas) (HHV-3).